The sequence spans 199 residues: Ribonuclease HII (199 aa).

In terms of domain architecture, RNase H type-2 spans 10-199 (RIEAGCDEAG…LLPEQLTLGF (190 aa)). A divalent metal cation is bound by residues aspartate 16, glutamate 17, and aspartate 108.

The protein belongs to the RNase HII family. Mn(2+) serves as cofactor. Requires Mg(2+) as cofactor.

It localises to the cytoplasm. It catalyses the reaction Endonucleolytic cleavage to 5'-phosphomonoester.. Endonuclease that specifically degrades the RNA of RNA-DNA hybrids. The polypeptide is Ribonuclease HII (Parabacteroides distasonis (strain ATCC 8503 / DSM 20701 / CIP 104284 / JCM 5825 / NCTC 11152)).